An 88-amino-acid chain; its full sequence is Small ribosomal subunit protein uS15 (88 aa).

It belongs to the universal ribosomal protein uS15 family. In terms of assembly, part of the 30S ribosomal subunit. Forms a bridge to the 50S subunit in the 70S ribosome, contacting the 23S rRNA.

Functionally, one of the primary rRNA binding proteins, it binds directly to 16S rRNA where it helps nucleate assembly of the platform of the 30S subunit by binding and bridging several RNA helices of the 16S rRNA. In terms of biological role, forms an intersubunit bridge (bridge B4) with the 23S rRNA of the 50S subunit in the ribosome. The polypeptide is Small ribosomal subunit protein uS15 (Desulfitobacterium hafniense (strain Y51)).